Reading from the N-terminus, the 593-residue chain is MRSHYCGDINRSHLGQEVTLVGWVNRSRDLGGVVFLDLRDREGLVQVVYDPDLKDVFDVASSLRGEFCVQVTGLVRARPDSQINSQMKTGEIEVLGKGLTIINASAPLPLSMDNHQNNSEEQRLKYRYLDLRRPEMAERLIFRAKVTSAVRRFLDSNGFLDIETPILTKATPEGARDYLVPSRTYKGQFFALPQSPQLFKQLLMMSGFDRYYQIVKCFRDEDLRADRQPEFTQIDIETSFMTSEEVMVKTEEMMRGLFLELLNVDLGEFPRMTYNEAMRRFGSDKPDLRNPLELVDVADLLKEVEFAVFNGPANDEEGRVAALRIPNGATLSRKQIDDYTKFVGIYGAKGLAWMKINDLAAGMEGIQSPVLKFLTESIVNDIISRTGAQTGDIILFGADKANVVAEAMGALRLKAGEDFELLEGQWRPLWVIDFPMFEKINGGFHAVHHPFTAPRGVTAAELEANPANRVSDAYDMVLNGCELGGGSVRIHNAEMQSAVFRILGIEEEEAKEKFGFLLEALRYGTPPHAGLAFGLDRIIMLMTGATSIRDVMAFPKTTTAACPLTNAPGFANPAQLTELGIKVVEKVKVADGE.

An L-aspartate-binding site is contributed by glutamate 173. An aspartate region spans residues 197–200; it reads QLFK. Arginine 219 contributes to the L-aspartate binding site. Residues 219–221 and glutamine 228 each bind ATP; that span reads RDE. Histidine 448 lines the L-aspartate pocket. Glutamate 482 contacts ATP. Arginine 489 is a binding site for L-aspartate. Position 534–537 (534–537) interacts with ATP; sequence GLDR.

The protein belongs to the class-II aminoacyl-tRNA synthetase family. Type 1 subfamily. In terms of assembly, homodimer.

Its subcellular location is the cytoplasm. The catalysed reaction is tRNA(Asp) + L-aspartate + ATP = L-aspartyl-tRNA(Asp) + AMP + diphosphate. Catalyzes the attachment of L-aspartate to tRNA(Asp) in a two-step reaction: L-aspartate is first activated by ATP to form Asp-AMP and then transferred to the acceptor end of tRNA(Asp). This chain is Aspartate--tRNA ligase, found in Shewanella denitrificans (strain OS217 / ATCC BAA-1090 / DSM 15013).